The primary structure comprises 845 residues: MSDIFNSPQNKASILTALMKSTTGDVEDVLIPKRFRPAKDPLDSPQAAAQFLKDNKYRILRPRAIPTMVELETDAALPRLRQMVEDGKLKDTVSVPEGTTAFYPKYYPFHKPDHDEVGTFGAPDITLLKQLTFFLLENDFPTGPETLRQVREAIATLQYGSGSYSGQLNRLLAMKGVATGRNPNKTPKTVGYTNEQLAKLLEQTLPINTPKHEDPDLRWAPSWLINYTGDLSTDKSYLPHVTIKSSAGLPYIGKTKGDTTAEALVLADSFIRDLGRAATSADPEAGVKKTITDFWYLSCGLLFPKGERYTQVDWDKKTRNIWSAPYPTHLLLSMVSTPVMNESKLNITNTQTPSLYGFSPFHGGMDRIMTIIRDSLDNDEDLVMIYADNIYILQDNTWYSIDLEKGEANCTPQHMQAMMYYLLTRGWTNEDGSPRYNPTWATFAMNVAPSMVVDSSCLLMNLQLKTYGQGSGNAFTFLNNHLMSTIVVAEWVKAGKPNPMTKEFMDLEEKTGINFKIERELKNLRETIVEAVETAPQDGYLADGSDLPPIRPGKAVELDLLGWSAIYSRQMEMFVPVLENERLIASAAYPKGLENKALARKPGAEIAYQIVRYEAIRLVGGWNNPLLETAAKHMSLDKRKRLEVKGIDVTGFLDDWNNMSEFGGDLEGITLSEPLTNQTLVDINTPLDSFDPKARPQTPRSPKKTLDEVTTAITSGTYKDPKSAVWRLLDQRTKLRVSTLRDQALALKPASSSVDNWAEATEELAQQQQLLMKANNLLKSSLTETREALETIQSDKIIAGKSNPEKNPGTAANPVVGYGEFSEKIPLTPTQKKNAKRREKQRRNQ.

Position 248-255 (248-255) interacts with GTP; that stretch reads GLPYIGKT. The 205-residue stretch at 384 to 588 folds into the RdRp catalytic domain; that stretch reads MIYADNIYIL…ENERLIASAA (205 aa). 2 disordered regions span residues 686-706 and 799-845; these read PLDS…KKTL and AGKS…RRNQ. Residues 833 to 845 show a composition bias toward basic residues; it reads KNAKRREKQRRNQ.

Interacts with VP3 in the cytoplasm. In terms of processing, exists in multiple phosphorylated forms.

It is found in the virion. It catalyses the reaction RNA(n) + a ribonucleoside 5'-triphosphate = RNA(n+1) + diphosphate. RNA-dependent RNA polymerase which is found both free and covalently attached to the genomic RNA. May also contain guanylyl and methyl transferase activities. The polypeptide is RNA-directed RNA polymerase (VP1) (Oncorhynchus mykiss (Rainbow trout)).